Here is a 341-residue protein sequence, read N- to C-terminus: Glyceraldehyde-3-phosphate dehydrogenase 3.1 (341 aa).

Residues 13-14, Asp-35, and Arg-85 each bind NAD(+); that span reads RI. Residues 157–159, Thr-188, 217–218, and Arg-240 contribute to the D-glyceraldehyde 3-phosphate site; these read SCT and TG. Cys-158 acts as the Nucleophile in catalysis. An NAD(+)-binding site is contributed by Asn-322.

The protein belongs to the glyceraldehyde-3-phosphate dehydrogenase family. In terms of assembly, homotetramer.

The protein localises to the cytoplasm. The enzyme catalyses D-glyceraldehyde 3-phosphate + phosphate + NAD(+) = (2R)-3-phospho-glyceroyl phosphate + NADH + H(+). It participates in carbohydrate degradation; glycolysis; pyruvate from D-glyceraldehyde 3-phosphate: step 1/5. This is Glyceraldehyde-3-phosphate dehydrogenase 3.1 from Caenorhabditis briggsae.